The following is a 228-amino-acid chain: Ribosomal RNA small subunit methyltransferase G (228 aa).

S-adenosyl-L-methionine-binding positions include Gly89, Leu94, Val140–Glu141, and Arg159.

This sequence belongs to the methyltransferase superfamily. RNA methyltransferase RsmG family.

It localises to the cytoplasm. The enzyme catalyses guanosine(527) in 16S rRNA + S-adenosyl-L-methionine = N(7)-methylguanosine(527) in 16S rRNA + S-adenosyl-L-homocysteine. Functionally, specifically methylates the N7 position of guanine in position 527 of 16S rRNA. This Burkholderia ambifaria (strain ATCC BAA-244 / DSM 16087 / CCUG 44356 / LMG 19182 / AMMD) (Burkholderia cepacia (strain AMMD)) protein is Ribosomal RNA small subunit methyltransferase G.